Here is a 402-residue protein sequence, read N- to C-terminus: Protein DesVIII (402 aa).

This sequence belongs to the cytochrome P450 family. In terms of assembly, forms a complex with DesVII.

Its pathway is antibiotic biosynthesis. Involved in the biosynthesis of the macrolide antibiotics methymycin, neomethymycin, narbomycin, and pikromycin. DesVIII assists the folding of the DesVII polypeptide. However, unlike chaperones, it remains bound to DesVII during catalysis, forming a tight DesVII/DesVIII complex. Although the formation of the DesVII/DesVIII complex is essential for the catalytic activity, DesVIII is unlikely to be involved in catalysis directly. The polypeptide is Protein DesVIII (Streptomyces venezuelae).